A 427-amino-acid chain; its full sequence is Vitamin D3 receptor (427 aa).

The nuclear receptor DNA-binding region spans 21–96 (PRICGVCGDR…IGMMKEFILT (76 aa)). Cys-24, Cys-27, Cys-41, Cys-44, Cys-60, Cys-66, Cys-76, and Cys-79 together coordinate Zn(2+). NR C4-type zinc fingers lie at residues 24–44 (CGVC…CEGC) and 60–79 (CPFN…CQAC). Positions 97 to 126 (DEEVQRKREMILKRKEEEALKDSLRPKLSE) are hinge. The NR LBD domain occupies 127–423 (EQQRIIAILL…LTPLVLEVFG (297 aa)). A calcitriol-binding site is contributed by Tyr-143. Residues 149–201 (DFGQFRPPVRGDEEEGTLPSRSSSAHAPSFSGSSSSSCSDQYTSSPDTMEPAS) are disordered. The span at 168-193 (SRSSSAHAPSFSGSSSSSCSDQYTSS) shows a compositional bias: low complexity. Position 237 (Ser-237) interacts with calcitriol. Residues 246-264 (KMIPGFRDLTAEDQIVLLK) are interaction with coactivator LXXLL motif. Calcitriol-binding residues include Arg-274, Ser-278, His-305, and His-397. The 9aaTAD signature appears at 416–424 (PLVLEVFGN).

It belongs to the nuclear hormone receptor family. NR1 subfamily. As to quaternary structure, homodimer in the absence of bound vitamin D3. Heterodimer with RXRA after vitamin D3 binding. Interacts with MED1, NCOA1, NCOA2, NCOA3 and NCOA6 coactivators, leading to a strong increase of transcription of target genes. Interacts with the corepressor NCOR1. Interacts with SNW1. Interacts with IRX4, the interaction does not affect its transactivation activity. Interacts with CRY1. Interacts with CRY2 in a ligand-dependent manner. Ubiquitinated by UBR5, leading to its degradation: UBR5 specifically recognizes and binds ligand-bound VDR when it is not associated with coactivators (NCOAs). In presence of NCOAs, the UBR5-degron is not accessible, preventing its ubiquitination and degradation.

The protein localises to the nucleus. It is found in the cytoplasm. In terms of biological role, nuclear receptor for calcitriol, the active form of vitamin D3 which mediates the action of this vitamin on cells. Enters the nucleus upon vitamin D3 binding where it forms heterodimers with the retinoid X receptor/RXR. The VDR-RXR heterodimers bind to specific response elements on DNA and activate the transcription of vitamin D3-responsive target genes. Plays a central role in calcium homeostasis. Also functions as a receptor for the secondary bile acid lithocholic acid (LCA) and its metabolites. The sequence is that of Vitamin D3 receptor (VDR) from Sus scrofa (Pig).